A 2397-amino-acid polypeptide reads, in one-letter code: MAYPLVVSFFLYIVILDKHAWCAPFNNLLTDWNLNTNVSALDPSDYWGEWENHEFFPSPEHWRFPIYTIAIDKWVDGDPTNNDFSGTRFEYDIYETEFRNGGDIIGVRQSLDYLQGMGVKAVYFAGTPFVNMPWGADQYSPLDFTLLDPHLGTINDWRGTIEEMHSKGMYVIVDLTVATLADLIGFEGFTNTTTPFTFIEHNALWKGEDRYADWNFTNSWDPDCELPRFWGESGEPVVVEWTGCYNSDFDQYGDTEAFGSHPDWQRQLSKFASVQDRLREWKPSVASKLKRLSCLVISMLDVDGFRIDKATQMTVDFLVDWAKSVRLCANRFNKSNFFIPGEVTGPSSFGAIYYNRGRQPNQRPANLIDALNATSSDNVYFLREEGENALDASAFHYSVYRIILRFLRMDGLMEIPYDLPVDLAEAWHQIVINEDSFNPKTEKYDPRHLYGVSNYDVFRWASVADGSRRLILGTMMTFFLFPGAPLIYYGDEQGLYVLDNSANNYLYGRQSMAAAPAWYIHGCYSGSSSTYPAIDLSPAKIGCLDIWNSLDHFDPSRIERQLFIEFQDIRSRYSALTHGWKSELLGNWTNIEYLPNSGINPSNVGTFSMVRGAINSLQNISSEYNFPGVKTSSSDVWILFTNSNVSVNLKSNCFSKEAIVSPFISGTKIKNLVYPYDEYQLEASSHFSQISNTEPMGCLPELGLDGYGYKLFVPINEYIPRRPFITKFSPSHDSRLVIPLEKLRIIVEFSEEMDCKSISKSLLITSKTLNGDSPVLDESSVTCQKINDKDRVRFSGQSSSLFRWSATFSNIADGIHRISFNNASTADGKDFTHSVDHFLLRVGSLNNPIVFSSANYSYDLLQKENNSVYIKHAAIGADMFRYSLDFGSTWTEWQTYDGNNTYCNLSGWSQSSRYGWKGHHIMVQYWSELTGSSNYMQESDLEYPYKRWFPHVFMDSDYTQWTHDSDIRNRMLPLENGSFLGYHIADVYPSALQFNVWGLNKDGKADKSFIYGSLQNNSFLSRVSPSSLEENVFYIQHPPPKSYLSWSVTFDPQRRRYYINPSGCVFVSLGIYLSSLIVPLLTGVLAVYIFKKKFYHVKFNAFGTSKQNLHFRQHDVLGMKNLFNFSCSNKIKGEEVLNDGDKGKRRTVLLATLEYDIPSLNICIKIGGLGVMAQLMARHLEHEDIIWVIPCVGDVSYSNVEEDDPIEVVIIDQTYFINVYKYVIGNIIYILLDAPIFRRQTSGKPYPSRADDLSSAIFYSAWNQCIASVISRNNIDLYHMNDYHGSLAPLYLLPKIIPVALSLHNAEFQGLWPLRNSSEKEEVCSVFNISKSVCSKYVQFGNVFNLLHAGASYIRIHQKGYGVVGVSSKYGKRSWARYPIFWGLRKIGKLPNPDPADNGTNFKDLDANSMNEFENIKAKHKRSAQEWANLNIDPEADLLIFVGRWTLQKGIDLIADITPTLLENFNSQIVVVGPVIDLYGKFAAEKFTALMKKYPGRIYSRPLFTQLPSYIFSGADFALIPSRDEPFGLVAVEFGRKGTLGIGAKVGGLGQMPGWWYTIESNTTAHLLCQFEEACRQALTSSKSVRTKLRAISTIQRFPVSEWVSKLDTHVRNCIKFSHKQNLEEDFIHEPVIDVDEFAISSSKDIDADEDLEIIGSSDNKAIDSNGEGFLIEKDNIGTGSYSNQQSFDFKSSESDSFPQKSPSVESFSIIDNDNPFHEGQNSSTGYKDIVQGLLAENGVSEAGVDVMTSIVSSTIPIVSNHQTEGSQMFNEISSVSSIHVYHDESQPPVEMPAESDTPLQNKLYHPGMWSSSDIRIPNNSSQLSIDSVRSGMRPFSLSKVPHQFDDEEGKALQIFREKLKDLNCKNSMNEMCIENFLMKCTRKYFDEVRKLRLGTLKPENLQFVKDPSSLALETNLLPASDTIEEKNDVGNKQVNSHILDPGFLKEEECVYEFEQLHGLRKALQVEIYGWPLYTILLAIGQVLAATSFQLNLFSDTPDQPEYQSYIVCSVYISASLFWYILHSLVPNIYALSTPFIIYATAFALAGLTTFSSLGDSRLWISRVATWIYSIASGSQALFFSLNFGNEGRYDILYWIVRACFIQGSQQVWSAALWYWGSYSTDKPNRMGVSGKLNPQPWMAAITWPIALVLLAIAFVVYRGLPNFYRQCPSKIPAFYRSLFRRRLIMWFFISVFLQNYWMSSVYGRSWAFMWSAHNVHKWAMFLLVILFYVAIWIALVALLASLSRYHSWILPILGLGFGAPRWLQTLWGTSNIGIYVPFLGKGAPYLSRMLWLYLGLLDTVQTVGIGIILLQTLTREHITVVLITGQIVGAIASMVGKASSPSKFGPGDVFIDFTHWSVKDGPQILASIPFWVCLICQLSVIIGYFLFFRRENLSRP.

The interval 1683–1705 is disordered; sequence SNQQSFDFKSSESDSFPQKSPSV. A compositionally biased stretch (low complexity) spans 1687–1698; the sequence is SFDFKSSESDSF.

The protein belongs to the glycosyltransferase group 1 family.

The enzyme catalyses [(1-&gt;3)-alpha-D-glucosyl](n) + UDP-alpha-D-glucose = [(1-&gt;3)-alpha-D-glucosyl](n+1) + UDP + H(+). In Schizosaccharomyces pombe (strain 972 / ATCC 24843) (Fission yeast), this protein is Cell wall alpha-1,3-glucan synthase mok11 (mok11).